The primary structure comprises 441 residues: Ribosomal protein uS12 methylthiotransferase RimO (441 aa).

Positions P8 to P118 constitute an MTTase N-terminal domain. [4Fe-4S] cluster contacts are provided by C17, C53, C82, C150, C154, and C157. The Radical SAM core domain occupies L136–E373. Residues Q376–V441 form the TRAM domain.

The protein belongs to the methylthiotransferase family. RimO subfamily. [4Fe-4S] cluster is required as a cofactor.

Its subcellular location is the cytoplasm. The catalysed reaction is L-aspartate(89)-[ribosomal protein uS12]-hydrogen + (sulfur carrier)-SH + AH2 + 2 S-adenosyl-L-methionine = 3-methylsulfanyl-L-aspartate(89)-[ribosomal protein uS12]-hydrogen + (sulfur carrier)-H + 5'-deoxyadenosine + L-methionine + A + S-adenosyl-L-homocysteine + 2 H(+). Its function is as follows. Catalyzes the methylthiolation of an aspartic acid residue of ribosomal protein uS12. The polypeptide is Ribosomal protein uS12 methylthiotransferase RimO (Salmonella heidelberg (strain SL476)).